Here is a 129-residue protein sequence, read N- to C-terminus: MDTMGRHVISELWGCDTNKLNNMEFIEQVFVNAALRAGAEVREVAFHKFAPQGVSGVVIISESHLTIHSFPEHGYASIDVYTCGPVIDPNVAAEFIARELNATTSEVLELPRGMGPVKPEKRLSHSAVK.

Catalysis depends on S63, which acts as the Schiff-base intermediate with substrate; via pyruvic acid. S63 is subject to Pyruvic acid (Ser); by autocatalysis. Catalysis depends on H68, which acts as the Proton acceptor; for processing activity. The active-site Proton donor; for catalytic activity is the C83.

This sequence belongs to the prokaryotic AdoMetDC family. Type 1 subfamily. Heterotetramer of two alpha and two beta chains arranged as a dimer of alpha/beta heterodimers. The cofactor is pyruvate. Post-translationally, is synthesized initially as an inactive proenzyme. Formation of the active enzyme involves a self-maturation process in which the active site pyruvoyl group is generated from an internal serine residue via an autocatalytic post-translational modification. Two non-identical subunits are generated from the proenzyme in this reaction, and the pyruvate is formed at the N-terminus of the alpha chain, which is derived from the carboxyl end of the proenzyme. The post-translation cleavage follows an unusual pathway, termed non-hydrolytic serinolysis, in which the side chain hydroxyl group of the serine supplies its oxygen atom to form the C-terminus of the beta chain, while the remainder of the serine residue undergoes an oxidative deamination to produce ammonia and the pyruvoyl group blocking the N-terminus of the alpha chain.

The enzyme catalyses S-adenosyl-L-methionine + H(+) = S-adenosyl 3-(methylsulfanyl)propylamine + CO2. It functions in the pathway amine and polyamine biosynthesis; S-adenosylmethioninamine biosynthesis; S-adenosylmethioninamine from S-adenosyl-L-methionine: step 1/1. Functionally, catalyzes the decarboxylation of S-adenosylmethionine to S-adenosylmethioninamine (dcAdoMet), the propylamine donor required for the synthesis of the polyamines spermine and spermidine from the diamine putrescine. The protein is S-adenosylmethionine decarboxylase proenzyme of Shouchella clausii (strain KSM-K16) (Alkalihalobacillus clausii).